Here is a 493-residue protein sequence, read N- to C-terminus: Alpha-amylase-related protein (493 aa).

Positions 1–19 (MFKFALTLTLCLAGSLSLA) are cleaved as a signal peptide. Residue Q20 is modified to Pyrrolidone carboxylic acid. A disulfide bridge connects residues C47 and C103. N117, Q168, and D177 together coordinate Ca(2+). Residues C156 and C170 are joined by a disulfide bond. Chloride is bound at residue R205. D207 serves as the catalytic Nucleophile. H211 serves as a coordination point for Ca(2+). E244 functions as the Proton donor in the catalytic mechanism. Chloride contacts are provided by N307 and R342. Disulfide bonds link C375–C381, C417–C440, and C447–C459.

It belongs to the glycosyl hydrolase 13 family. Monomer. The cofactor is Ca(2+). It depends on chloride as a cofactor. Midgut and fat body.

The protein localises to the secreted. It catalyses the reaction Endohydrolysis of (1-&gt;4)-alpha-D-glucosidic linkages in polysaccharides containing three or more (1-&gt;4)-alpha-linked D-glucose units.. This chain is Alpha-amylase-related protein (Amyrel), found in Drosophila melanogaster (Fruit fly).